Here is a 383-residue protein sequence, read N- to C-terminus: Putative glutamate--cysteine ligase 2-2 (383 aa).

This sequence belongs to the glutamate--cysteine ligase type 2 family. YbdK subfamily.

It carries out the reaction L-cysteine + L-glutamate + ATP = gamma-L-glutamyl-L-cysteine + ADP + phosphate + H(+). Its function is as follows. ATP-dependent carboxylate-amine ligase which exhibits weak glutamate--cysteine ligase activity. This chain is Putative glutamate--cysteine ligase 2-2, found in Legionella pneumophila (strain Lens).